The primary structure comprises 207 residues: Ribosomal RNA large subunit methyltransferase E (207 aa).

The segment at 1-20 is disordered; the sequence is MKRDPTKGRKTPDHYARKAK. S-adenosyl-L-methionine is bound by residues glycine 56, tryptophan 58, aspartate 76, aspartate 94, and aspartate 116. Catalysis depends on lysine 156, which acts as the Proton acceptor.

It belongs to the class I-like SAM-binding methyltransferase superfamily. RNA methyltransferase RlmE family.

It localises to the cytoplasm. It carries out the reaction uridine(2552) in 23S rRNA + S-adenosyl-L-methionine = 2'-O-methyluridine(2552) in 23S rRNA + S-adenosyl-L-homocysteine + H(+). In terms of biological role, specifically methylates the uridine in position 2552 of 23S rRNA at the 2'-O position of the ribose in the fully assembled 50S ribosomal subunit. The polypeptide is Ribosomal RNA large subunit methyltransferase E (Desulfosudis oleivorans (strain DSM 6200 / JCM 39069 / Hxd3) (Desulfococcus oleovorans)).